Here is a 252-residue protein sequence, read N- to C-terminus: Glucosamine-6-phosphate deaminase (252 aa).

Residue Asp64 is the Proton acceptor; for enolization step of the active site. The For ring-opening step role is filled by Asn130. His132 acts as the Proton acceptor; for ring-opening step in catalysis. Residue Glu137 is the For ring-opening step of the active site.

It belongs to the glucosamine/galactosamine-6-phosphate isomerase family. NagB subfamily.

It catalyses the reaction alpha-D-glucosamine 6-phosphate + H2O = beta-D-fructose 6-phosphate + NH4(+). The protein operates within amino-sugar metabolism; N-acetylneuraminate degradation; D-fructose 6-phosphate from N-acetylneuraminate: step 5/5. Catalyzes the reversible isomerization-deamination of glucosamine 6-phosphate (GlcN6P) to form fructose 6-phosphate (Fru6P) and ammonium ion. This chain is Glucosamine-6-phosphate deaminase, found in Exiguobacterium sibiricum (strain DSM 17290 / CCUG 55495 / CIP 109462 / JCM 13490 / 255-15).